We begin with the raw amino-acid sequence, 336 residues long: Gibberellin 2-beta-dioxygenase 7 (336 aa).

A Fe2OG dioxygenase domain is found at leucine 191–proline 291. Fe cation is bound by residues histidine 216, aspartate 218, and histidine 272. The active site involves arginine 282. Residue arginine 282 coordinates 2-oxoglutarate.

It belongs to the iron/ascorbate-dependent oxidoreductase family. GA2OX subfamily. The cofactor is Fe(2+).

The catalysed reaction is gibberellin A1 + 2-oxoglutarate + O2 = gibberellin A8 + succinate + CO2. It functions in the pathway plant hormone biosynthesis; gibberellin biosynthesis. In terms of biological role, catalyzes the 2-beta-hydroxylation of gibberellins (GA) precursors, rendering them unable to be converted to active GAs. Hydroxylates the C20-GA GA12 and GA53, but is not active on C19-GAs, like GA1, GA4, GA9 and GA20. The chain is Gibberellin 2-beta-dioxygenase 7 (GA2OX7) from Arabidopsis thaliana (Mouse-ear cress).